The following is a 519-amino-acid chain: MAAEREPPPLGDGKPTDFEELEDGEDLFTSTVSTLESSPSSPDPASFLAEDISTNSNGPKPAEVALDDDREDLFAEATEEVSLDSPEREPILSSETSPAVTPVTPTTLIAPRIESKSMSAPVIFDRSRDEIEEEANGDVFDIEIGVSDPEKVGDGMNAYMAYRVTTKTSLSMFSKSEFSVKRRFSDFLGLHSKLASKYLHVGYIVPPAPEKSIVGMTKVKVGKEDSSSTEFVEKRRAALERYLQRTVKHPTLLQDPDLRQFLESSELPRAVNTQALSGAGILRMVNKAADAVNKMTIKMNESDAWFEEKQQQFENQDQQLRKLHASVEALVCHRKELSANTAAFAKSAAMLGNSEDHTALSRALSQLAEVEEKIDQLHQEQAFADFYMFSELLSDYIRLIAAVKGVFDHRVKCWQKWEDAQITLLKKRETEAKMMVANKPDKIQQAKNEIREWEAKVQQGERDFEQISKTIRKEVGRFEKERVKDFKTVIIKYLESLVQTQQQLIKYWEAFLPEAKAIA.

Disordered stretches follow at residues 1-20 (MAAE…DFEE) and 30-103 (STVS…VTPV). Low complexity-rich tracts occupy residues 30–44 (STVS…SPDP) and 93–103 (SSETSPAVTPV). Residue serine 97 is modified to Phosphoserine. Threonine 101 and threonine 104 each carry phosphothreonine. Phosphoserine occurs at positions 117 and 119. Residues 140-269 (FDIEIGVSDP…QFLESSELPR (130 aa)) enclose the PX domain. A 1,2-diacyl-sn-glycero-3-phospho-(1D-myo-inositol-3-phosphate) contacts are provided by arginine 183, serine 185, lysine 211, and arginine 235. Phosphoserine is present on serine 185. The interval 260 to 519 (QFLESSELPR…AFLPEAKAIA (260 aa)) is interaction with RhoG. A Phosphoserine modification is found at serine 277. Positions 278-295 (GAGILRMVNKAADAVNKM) are membrane-binding amphipathic helix. In terms of domain architecture, BAR spans 299–519 (MNESDAWFEE…AFLPEAKAIA (221 aa)). Residue lysine 469 is modified to N6-acetyllysine.

Belongs to the sorting nexin family. Predominantly forms heterodimers with BAR domain-containing sorting nexins SNX5, SNX6 and SNX32; can self-associate to form homodimers. The heterodimers are proposed to self-assemble into helical arrays on the membrane to stabilize and expand local membrane curvature underlying endosomal tubule formation. Thought to be a component of the originally described retromer complex (also called SNX-BAR retromer) which is a pentamer containing the heterotrimeric retromer cargo-selective complex (CSC), also decribed as vacuolar protein sorting subcomplex (VPS) and a heterodimeric membrane-deforming subcomplex formed between SNX1 or SNX2 and SNX5 or SNX6 (also called SNX-BAR subcomplex); the respective CSC and SNX-BAR subcomplexes associate with low affinity. Interacts with SNX5, SNX6, SNX32, VPS26A, VPS29, VPS35, FNBP1, KALRN, RHOG (GDP-bound form).

It localises to the early endosome membrane. The protein localises to the cell projection. Its subcellular location is the lamellipodium. In terms of biological role, involved in several stages of intracellular trafficking. Interacts with membranes containing phosphatidylinositol 3-phosphate (PtdIns(3P)) or phosphatidylinositol 3,5-bisphosphate (PtdIns(3,5)P2). Acts in part as component of the retromer membrane-deforming SNX-BAR subcomplex. The SNX-BAR retromer mediates retrograde transport of cargo proteins from endosomes to the trans-Golgi network (TGN) and is involved in endosome-to-plasma membrane transport for cargo protein recycling. The SNX-BAR subcomplex functions to deform the donor membrane into a tubular profile called endosome-to-TGN transport carrier (ETC). Can sense membrane curvature and has in vitro vesicle-to-membrane remodeling activity. Required for retrograde endosome-to-TGN transport of TGN38. Promotes KALRN- and RHOG-dependent but retromer-independent membrane remodeling such as lamellipodium formation; the function is dependent on GEF activity of KALRN. The chain is Sorting nexin-2 (SNX2) from Bos taurus (Bovine).